A 1065-amino-acid chain; its full sequence is Presequence protease, mitochondrial (1065 aa).

Residues 1-42 (MLRSFSGAGKCKCRIPVSRQPVCGRSLRISSTLTPWNQSRRA) constitute a mitochondrion transit peptide. Position 117 (H117) interacts with Zn(2+). Residue E120 is the Proton acceptor of the active site. Residue H121 coordinates Zn(2+). E193 is an active-site residue. Residue E230 participates in Zn(2+) binding.

The protein belongs to the peptidase M16 family. PreP subfamily. Monomer and homodimer; homodimerization is induced by binding of the substrate. Zn(2+) is required as a cofactor.

Its subcellular location is the mitochondrion intermembrane space. It is found in the mitochondrion matrix. Degrades mitochondrial transit peptides after their cleavage in the intermembrane space or in the matrix, and presequence peptides; clearance of these peptides is required to keep the presequence processing machinery running. Preferentially cleaves the N-terminal side of paired basic amino acid residues. Also degrades other unstructured peptides. May function as an ATP-dependent peptidase as opposed to a metalloendopeptidase. In Aspergillus fumigatus (strain ATCC MYA-4609 / CBS 101355 / FGSC A1100 / Af293) (Neosartorya fumigata), this protein is Presequence protease, mitochondrial (cym1).